The following is a 302-amino-acid chain: DDRGK domain-containing protein 1 (302 aa).

Residues 1 to 5 (MDGGG) lie on the Lumenal side of the membrane. The helical transmembrane segment at 6–26 (GMLGAVVCLLLVFAIFPLLLW) threads the bilayer. Topologically, residues 27 to 302 (RRRSDAAHRL…DENAAAGTEL (276 aa)) are cytoplasmic. Disordered regions lie at residues 36 to 151 (LPPQ…EEAR) and 279 to 302 (DLEP…GTEL). The segment covering 79 to 91 (VDDADSDLEEEIQ) has biased composition (acidic residues). Residues 103 to 151 (KRQDREAQRQAEEAARDSRRTKQDRYAEMRRKKDEEREAQERLMEEEAR) are compositionally biased toward basic and acidic residues.

The protein belongs to the DDRGK1 family.

Its subcellular location is the endoplasmic reticulum membrane. Its function is as follows. Substrate adapter for ufmylation, the covalent attachment of the ubiquitin-like modifier UFM1 to substrate proteins. This chain is DDRGK domain-containing protein 1, found in Oryza sativa subsp. japonica (Rice).